Here is a 1024-residue protein sequence, read N- to C-terminus: Error-prone DNA polymerase (1024 aa).

Belongs to the DNA polymerase type-C family. DnaE2 subfamily.

It localises to the cytoplasm. The enzyme catalyses DNA(n) + a 2'-deoxyribonucleoside 5'-triphosphate = DNA(n+1) + diphosphate. In terms of biological role, DNA polymerase involved in damage-induced mutagenesis and translesion synthesis (TLS). It is not the major replicative DNA polymerase. In Vibrio vulnificus (strain CMCP6), this protein is Error-prone DNA polymerase.